A 248-amino-acid chain; its full sequence is Small ribosomal subunit protein uS2 (248 aa).

Belongs to the universal ribosomal protein uS2 family.

This is Small ribosomal subunit protein uS2 from Alkalilimnicola ehrlichii (strain ATCC BAA-1101 / DSM 17681 / MLHE-1).